Consider the following 31-residue polypeptide: Putative gene 37 protein (31 aa).

The protein is Putative gene 37 protein (37) of Bacillus subtilis (Bacteriophage SP01).